Consider the following 358-residue polypeptide: Chorismate synthase (358 aa).

2 residues coordinate NADP(+): R48 and R54. FMN-binding positions include 125–127, G282, 297–301, and R323; these read RSS and KPPAS.

The protein belongs to the chorismate synthase family. As to quaternary structure, homotetramer. FMNH2 is required as a cofactor.

It catalyses the reaction 5-O-(1-carboxyvinyl)-3-phosphoshikimate = chorismate + phosphate. It participates in metabolic intermediate biosynthesis; chorismate biosynthesis; chorismate from D-erythrose 4-phosphate and phosphoenolpyruvate: step 7/7. Its function is as follows. Catalyzes the anti-1,4-elimination of the C-3 phosphate and the C-6 proR hydrogen from 5-enolpyruvylshikimate-3-phosphate (EPSP) to yield chorismate, which is the branch point compound that serves as the starting substrate for the three terminal pathways of aromatic amino acid biosynthesis. This reaction introduces a second double bond into the aromatic ring system. This Roseiflexus castenholzii (strain DSM 13941 / HLO8) protein is Chorismate synthase.